The sequence spans 596 residues: Fumarate reductase (cytochrome) (596 aa).

The signal sequence occupies residues 1 to 25 (MKKMNLAVCIATLMGTAGLMGTAVA). Residues His-33, Cys-39, Cys-42, His-43, Cys-61, Cys-64, His-65, His-83, His-86, Cys-93, Cys-96, His-97, Ala-99, His-100, Cys-107, Cys-110, and His-111 each coordinate heme c. The segment at 143–596 (ALASAPHDTV…EEAAKYSKKN (454 aa)) is flavoprotein-like. FAD contacts are provided by Ala-162, Glu-181, Asn-189, Ala-194, Gly-195, Gly-196, Gly-303, and Asp-369. Gly-195 contributes to the fumarate binding site. Succinate is bound at residue Gly-195. Residue Tyr-386 coordinates heme c. Succinate is bound by residues His-390, Thr-402, and Glu-403. Residues Thr-402 and Glu-403 each coordinate fumarate. The active-site Proton donor is Arg-427. His-529 lines the fumarate pocket. His-529 is a binding site for succinate. Positions 530 and 559 each coordinate FAD. Residues Arg-569 and Gly-572 each coordinate fumarate. Succinate-binding residues include Arg-569 and Gly-572. FAD is bound by residues Ala-574 and Ile-575.

The protein in the C-terminal section; belongs to the FAD-dependent oxidoreductase 2 family. FRD/SDH subfamily. In terms of assembly, monomer. The cofactor is FAD. Heme c serves as cofactor.

Its subcellular location is the periplasm. The catalysed reaction is 2 Fe(III)-[cytochrome c] + succinate = fumarate + 2 Fe(II)-[cytochrome c] + 2 H(+). Mesaconic acid is a competitive inhibitor of fumarate reduction. Flavocytochrome that catalyzes the reduction of fumarate to succinate. Is essential for fumarate respiration during anaerobic growth, acting as the terminal reductase. Receives electrons from the membrane-bound tetraheme c-type cytochrome CymA. Is essentially unidirectional, catalyzing only fumarate reduction. Cannot reduce nitrite, dimethylsulphoxide, trimethylamine-N-oxide (TMAO) or sulfite. In vitro, can use the artificial electron donor methyl viologen. This is Fumarate reductase (cytochrome) from Shewanella frigidimarina (strain NCIMB 400).